The chain runs to 185 residues: UPF0397 protein CPR_1556 (185 aa).

The next 5 helical transmembrane spans lie at 11-31 (IVAIGIGSAVFMILGRFGSLP), 44-64 (AFLSLMALLYGPLAGFLIGFI), 71-91 (IVFFGSPWISWVFASGIVGLI), 111-131 (IFMFNLIQIIANGVAWFLVAP), and 149-169 (GVIGGISNMITVGVLGTVLIS).

The protein belongs to the UPF0397 family.

Its subcellular location is the cell membrane. The protein is UPF0397 protein CPR_1556 of Clostridium perfringens (strain SM101 / Type A).